A 268-amino-acid polypeptide reads, in one-letter code: MINIQNTILGKIVDRKHEELAARLKQRNLQDVEELAKAATPVRGFANALQHKRPGVIAEIKKASPSKGIIRADFNPAEIAQQYEQAGAACLSVLTDVDFFQGADENIAIARNHCALPALRKDFLVDPYNVVEARALHADCILLIVACLSDQQLEEMSKTAFEHQLDVLVEVHDEEELERALKLSEQCLLGVNNRNLKTFDVDLNTTIRLKKLLPASRLLITESGIATPDDVRMMQEHDIHSFLVGESFMKQPRPDQAFTALFGQPQTV.

It belongs to the TrpC family.

The catalysed reaction is 1-(2-carboxyphenylamino)-1-deoxy-D-ribulose 5-phosphate + H(+) = (1S,2R)-1-C-(indol-3-yl)glycerol 3-phosphate + CO2 + H2O. It participates in amino-acid biosynthesis; L-tryptophan biosynthesis; L-tryptophan from chorismate: step 4/5. In Acinetobacter baumannii (strain AB0057), this protein is Indole-3-glycerol phosphate synthase.